Here is a 573-residue protein sequence, read N- to C-terminus: Putative ABC transporter ATP-binding protein LJ_1704 (573 aa).

ABC transporter domains lie at 6 to 247 (IEFK…GVRE) and 303 to 536 (LKLD…ASLK). ATP contacts are provided by residues 40–47 (GPSGSGKS) and 337–344 (GQNGAGKT).

Belongs to the ABC transporter superfamily.

Its subcellular location is the cell membrane. In terms of biological role, probably part of an ABC transporter complex. Responsible for energy coupling to the transport system. In Lactobacillus johnsonii (strain CNCM I-12250 / La1 / NCC 533), this protein is Putative ABC transporter ATP-binding protein LJ_1704.